Reading from the N-terminus, the 1244-residue chain is Structural polyprotein (1244 aa).

A disordered region spans residues 1-113 (MNSVFYNPFG…GKRQRTALKF (113 aa)). Polar residues predominate over residues 35–44 (GLTTQIQQLT). A host transcription inhibition region spans residues 35–69 (GLTTQIQQLTRAVRALVLDNATRRQRPAPRTRPRK). Residues 57 to 81 (RRQRPAPRTRPRKPKTQKPKPKKQN) are compositionally biased toward basic residues. A Nuclear localization signal motif is present at residues 62 to 103 (APRTRPRKPKTQKPKPKKQNQKPPQQQKKGKNQPQQPKKPKP). The span at 82-97 (QKPPQQQKKGKNQPQQ) shows a compositional bias: low complexity. A binding to the viral RNA region spans residues 85-118 (PQQQKKGKNQPQQPKKPKPGKRQRTALKFEADRT). The span at 99-109 (KKPKPGKRQRT) shows a compositional bias: basic residues. The interval 103–117 (PGKRQRTALKFEADR) is ribosome-binding. A Peptidase S3 domain is found at 117–267 (RTFVGKNEDG…KTTHEDTVEW (151 aa)). Residue histidine 144 is the Charge relay system of the active site. Residues 149–159 (IDHPALAKLKF) carry the Nuclear export signal motif. Residues 160-165 (TKSSSY) form an interaction with spike glycoprotein E2 region. Residue aspartate 166 is the Charge relay system of the active site. Positions 188-198 (PEVFYNWHHGA) are dimerization of the capsid protein. Serine 218 (charge relay system) is an active-site residue. Residues 224–228 (DNSGK) are dimerization of the capsid protein. The interaction with spike glycoprotein E2 stretch occupies residues 252 to 256 (KKGAA). The interval 268 to 280 (SRAITAMCILQNV) is functions as an uncleaved signal peptide for the precursor of protein E3/E2. Residues 268–696 (SRAITAMCIL…HYYHLYPFYT (429 aa)) lie on the Extracellular side of the membrane. N-linked (GlcNAc...) asparagine; by host glycosylation occurs at asparagine 279. Cystine bridges form between cysteine 284–cysteine 290, cysteine 481–cysteine 595, cysteine 530–cysteine 555, and cysteine 532–cysteine 549. Asparagine 525 is a glycosylation site (N-linked (GlcNAc...) asparagine; by host). An N-linked (GlcNAc...) asparagine; by host glycan is attached at asparagine 647. A helical transmembrane segment spans residues 697–717 (VTVLSGMGLAICAGLVISILC). The Cytoplasmic portion of the chain corresponds to 718-751 (CCKARRDCLTPYQLAPNATVPFLVTLCCCFQRTS). The segment at 720–724 (KARRD) is interaction with the capsid protein. S-palmitoyl cysteine; by host attachment occurs at residues cysteine 725, cysteine 745, and cysteine 746. A disulfide bond links cysteine 725 and cysteine 746. The Extracellular segment spans residues 752 to 764 (ADEFTDTMGYLWQ). 2 consecutive transmembrane segments (helical) span residues 765–785 (HSQT…ITLV) and 786–805 (RCCS…NKAD). The Extracellular segment spans residues 806–1218 (AYEHTITVPN…KTSWNWITAL (413 aa)). 4 disulfides stabilise this stretch: cysteine 855/cysteine 920, cysteine 868/cysteine 900, cysteine 869/cysteine 902, and cysteine 874/cysteine 884. Positions 890-907 (VYPFLWGGAQCFCDSENS) are E1 fusion peptide loop. N-linked (GlcNAc...) asparagine; by host glycosylation is found at asparagine 945 and asparagine 1051. 4 disulfide bridges follow: cysteine 1065/cysteine 1077, cysteine 1106/cysteine 1181, cysteine 1111/cysteine 1185, and cysteine 1133/cysteine 1175. The helical transmembrane segment at 1219–1239 (MGGISSIAAIAAIVLVIALVF) threads the bilayer. Residues 1240 to 1244 (TAQHR) are Cytoplasmic-facing.

As to quaternary structure, homodimer. Homomultimer. Interacts with host karyopherin KPNA4; this interaction allows the nuclear import of the viral capsid protein. Interacts with spike glycoprotein E2. Interacts with host IRAK1; the interaction leads to inhibition of IRAK1-dependent signaling. In terms of assembly, the precursor of protein E3/E2 and E1 form a heterodimer shortly after synthesis. The precursor of protein E3/E2 and E1 form a heterodimer shortly after synthesis. Processing of the precursor of protein E3/E2 into E2 and E3 results in a heterodimer of the spike glycoproteins E2 and E1. Spike at virion surface are constituted of a trimer of E2-E1 heterodimers. After target cell attachment and endocytosis, E1 change conformation to form homotrimers. Interacts with 6K protein. As to quaternary structure, interacts with spike glycoprotein E1. Processing of the precursor of protein E3/E2 into E2 and E3 results in a heterodimer of the spike glycoproteins E2 and E1. Spike at virion surface are constituted of a trimer of E2-E1 heterodimers. Interacts with 6K protein. In terms of assembly, oligomer. Interacts with spike glycoprotein E1. Interacts with spike glycoprotein E2. Structural polyprotein: Specific enzymatic cleavages in vivo yield mature proteins. Capsid protein is auto-cleaved during polyprotein translation, unmasking a signal peptide at the N-terminus of the precursor of E3/E2. The remaining polyprotein is then targeted to the host endoplasmic reticulum, where host signal peptidase cleaves it into pE2, 6K and E1 proteins. pE2 is further processed to mature E3 and E2 by host furin in trans-Golgi vesicle. Post-translationally, palmitoylated via thioester bonds. These palmitoylations may induce disruption of the C-terminus transmembrane. This would result in the reorientation of E2 C-terminus from lumenal to cytoplasmic side. In terms of processing, N-glycosylated. Palmitoylated via thioester bonds.

It localises to the virion. The protein resides in the host cytoplasm. The protein localises to the host cell membrane. Its subcellular location is the host nucleus. It is found in the virion membrane. It localises to the host Golgi apparatus. The protein resides in the host trans-Golgi network. The protein localises to the host endoplasmic reticulum. It carries out the reaction Autocatalytic release of the core protein from the N-terminus of the togavirus structural polyprotein by hydrolysis of a -Trp-|-Ser- bond.. Functionally, forms an icosahedral capsid with a T=4 symmetry composed of 240 copies of the capsid protein surrounded by a lipid membrane through which penetrate 80 spikes composed of trimers of E1-E2 heterodimers. The capsid protein binds to the viral RNA genome at a site adjacent to a ribosome binding site for viral genome translation following genome release. Possesses a protease activity that results in its autocatalytic cleavage from the nascent structural protein. Following its self-cleavage, the capsid protein transiently associates with ribosomes, and within several minutes the protein binds to viral RNA and rapidly assembles into icosahedric core particles. The resulting nucleocapsid eventually associates with the cytoplasmic domain of the spike glycoprotein E2 at the cell membrane, leading to budding and formation of mature virions. In case of infection, new virions attach to target cells and after clathrin-mediated endocytosis their membrane fuses with the host endosomal membrane. This leads to the release of the nucleocapsid into the cytoplasm, followed by an uncoating event necessary for the genomic RNA to become accessible. The uncoating might be triggered by the interaction of capsid proteins with ribosomes. Binding of ribosomes would release the genomic RNA since the same region is genomic RNA-binding and ribosome-binding. Specifically inhibits interleukin-1 receptor-associated kinase 1/IRAK1-dependent signaling during viral entry, representing a means by which the alphaviruses may evade innate immune detection and activation prior to viral gene expression. Its function is as follows. Provides the signal sequence for the translocation of the precursor of protein E3/E2 to the host endoplasmic reticulum. Furin-cleaved E3 remains associated with spike glycoprotein E1 and mediates pH protection of the latter during the transport via the secretory pathway. After virion release from the host cell, the assembly protein E3 is gradually released in the extracellular space. Plays a role in viral attachment to target host cell, by binding to the cell receptor. Synthesized as a p62 precursor which is processed by furin at the cell membrane just before virion budding, giving rise to E2-E1 heterodimer. The p62-E1 heterodimer is stable, whereas E2-E1 is unstable and dissociate at low pH. p62 is processed at the last step, presumably to avoid E1 fusion activation before its final export to cell surface. E2 C-terminus contains a transitory transmembrane that would be disrupted by palmitoylation, resulting in reorientation of the C-terminal tail from lumenal to cytoplasmic side. This step is critical since E2 C-terminus is involved in budding by interacting with capsid proteins. This release of E2 C-terminus in cytoplasm occurs lately in protein export, and precludes premature assembly of particles at the endoplasmic reticulum membrane. In terms of biological role, acts as a viroporin that participates in virus glycoprotein processing and transport to the plasma membrane, cell permeabilization and budding of viral particles. Disrupts the calcium homeostasis of the cell, probably at the endoplasmic reticulum level. This leads to cytoplasmic calcium elevation. Because of its lipophilic properties, the 6K protein is postulated to influence the selection of lipids that interact with the transmembrane domains of the glycoproteins, which, in turn, affects the deformability of the bilayer required for the extreme curvature that occurs as budding proceeds. Present in low amount in virions, about 3% compared to viral glycoproteins. Functionally, class II viral fusion protein. Fusion activity is inactive as long as E1 is bound to E2 in mature virion. After virus attachment to target cell and endocytosis, acidification of the endosome induce dissociation of E1/E2 heterodimer and concomitant trimerization of the E1 subunits. This E1 trimer is fusion active, and promotes release of viral nucleocapsid in cytoplasm after endosome and viral membrane fusion. Efficient fusion requires the presence of cholesterol and sphingolipid in the target membrane. The protein is Structural polyprotein of Aedes (AURAV).